A 379-amino-acid polypeptide reads, in one-letter code: Elongation factor Ts, mitochondrial (379 aa).

A mitochondrion-targeting transit peptide spans 1 to 45 (MALYRTARRPLQMMLFSRLGNPEQNYSSWARKDASQSAFGMFVRL).

It belongs to the EF-Ts family.

Its subcellular location is the mitochondrion. Its function is as follows. Associates with the EF-Tu.GDP complex and induces the exchange of GDP to GTP. It remains bound to the aminoacyl-tRNA.EF-Tu.GTP complex up to the GTP hydrolysis stage on the ribosome. This is Elongation factor Ts, mitochondrial from Ricinus communis (Castor bean).